Here is a 483-residue protein sequence, read N- to C-terminus: Lipoamide acyltransferase component of branched-chain alpha-keto acid dehydrogenase complex, mitochondrial (483 aa).

The transit peptide at 1–75 (MIARRIWRSH…AMATDSNSGL (75 aa)) directs the protein to the mitochondrion. A Lipoyl-binding domain is found at 76–150 (IDVPLAQTGE…KVGETLVRLA (75 aa)). Lys-116 bears the N6-lipoyllysine mark. Residues 183-220 (LSTPAVRNLAKDLGIDINVITGTGKDGRVLKEDVLRFS) enclose the Peripheral subunit-binding (PSBD) domain. Residues His-453 and Asp-457 contribute to the active site.

It belongs to the 2-oxoacid dehydrogenase family. In terms of assembly, forms a 24-polypeptide structural core with octahedral symmetry. It depends on (R)-lipoate as a cofactor. In terms of tissue distribution, expressed in the non-photosynthetic organs such as siliques, flowers and roots.

Its subcellular location is the mitochondrion matrix. It catalyses the reaction N(6)-[(R)-dihydrolipoyl]-L-lysyl-[protein] + 2-methylpropanoyl-CoA = N(6)-[(R)-S(8)-2-methylpropanoyldihydrolipoyl]-L-lysyl-[protein] + CoA. In terms of biological role, the branched-chain alpha-keto dehydrogenase complex catalyzes the overall conversion of alpha-keto acids to acyl-CoA and CO(2). It contains multiple copies of three enzymatic components: branched-chain alpha-keto acid decarboxylase (E1), lipoamide acyltransferase (E2) and lipoamide dehydrogenase (E3). Within this complex, the catalytic function of this enzyme is to accept, and to transfer to coenzyme A, acyl groups that are generated by the branched-chain alpha-keto acid decarboxylase component. Required during sugar starvation and acts under the control of a sugar-sensing mechanism involving Ser/Thr kinases and phosphatases. This Arabidopsis thaliana (Mouse-ear cress) protein is Lipoamide acyltransferase component of branched-chain alpha-keto acid dehydrogenase complex, mitochondrial (BCE2).